A 177-amino-acid chain; its full sequence is Large ribosomal subunit protein uL6 (177 aa).

Belongs to the universal ribosomal protein uL6 family. As to quaternary structure, part of the 50S ribosomal subunit.

In terms of biological role, this protein binds to the 23S rRNA, and is important in its secondary structure. It is located near the subunit interface in the base of the L7/L12 stalk, and near the tRNA binding site of the peptidyltransferase center. The chain is Large ribosomal subunit protein uL6 from Rhodospirillum rubrum (strain ATCC 11170 / ATH 1.1.1 / DSM 467 / LMG 4362 / NCIMB 8255 / S1).